The primary structure comprises 86 residues: U15-lycotoxin-Ls1c (86 aa).

The N-terminal stretch at 1–20 is a signal peptide; sequence MNSKIFAVLLLLAFLSCVLS. The region spanning 21-66 is the WAP domain; that stretch reads DQYCPKSSITACKKMNIRNDCCKDDDCTGGSWCCATPCGNICKYPT. Intrachain disulfides connect Cys24–Cys54, Cys32–Cys58, Cys41–Cys53, Cys42–Cys80, and Cys47–Cys62.

The protein belongs to the venom protein 11 family. 01 (wap-1) subfamily. In terms of processing, contains 5 disulfide bonds. In terms of tissue distribution, expressed by the venom gland.

It localises to the secreted. In terms of biological role, has antibacterial activity. This is U15-lycotoxin-Ls1c from Lycosa singoriensis (Wolf spider).